The following is a 1163-amino-acid chain: Integrin alpha-X (1163 aa).

A signal peptide spans methionine 1 to glycine 19. The Extracellular segment spans residues phenylalanine 20–proline 1107. FG-GAP repeat units lie at residues aspartate 23–proline 78 and isoleucine 79–leucine 138. A glycan (N-linked (GlcNAc...) asparagine) is linked at asparagine 61. Cysteines 69 and 76 form a disulfide. Asparagine 89 carries an N-linked (GlcNAc...) asparagine glycan. 2 disulfide bridges follow: cysteine 108–cysteine 126 and cysteine 116–cysteine 145. 4 residues coordinate Mg(2+): aspartate 157, serine 159, serine 161, and aspartate 259. In terms of domain architecture, VWFA spans arginine 165–threonine 339. FG-GAP repeat units lie at residues glutamate 340–isoleucine 391, asparagine 392–tryptophan 443, arginine 444–tryptophan 504, aspartate 507–serine 565, and glutamine 570–alanine 630. A glycan (N-linked (GlcNAc...) asparagine) is linked at asparagine 392. Ca(2+) is bound by residues aspartate 466, aspartate 468, aspartate 470, and aspartate 474. Cysteine 495 and cysteine 506 form a disulfide bridge. Aspartate 530, asparagine 532, aspartate 534, aspartate 538, aspartate 593, aspartate 597, and aspartate 601 together coordinate Ca(2+). 2 cysteine pairs are disulfide-bonded: cysteine 639–cysteine 722 and cysteine 655–cysteine 712. Residues asparagine 697 and asparagine 735 are each glycosylated (N-linked (GlcNAc...) asparagine). Cystine bridges form between cysteine 771-cysteine 777 and cysteine 848-cysteine 863. 2 N-linked (GlcNAc...) asparagine glycosylation sites follow: asparagine 899 and asparagine 939. 2 cysteine pairs are disulfide-bonded: cysteine 998/cysteine 1022 and cysteine 1027/cysteine 1032. The N-linked (GlcNAc...) asparagine glycan is linked to asparagine 1050. The helical transmembrane segment at leucine 1108–tyrosine 1128 threads the bilayer. At lysine 1129 to lysine 1163 the chain is on the cytoplasmic side. The short motif at glycine 1131–arginine 1135 is the GFFKR motif element.

This sequence belongs to the integrin alpha chain family. As to quaternary structure, heterodimer of an alpha and a beta subunit. Alpha-X associates with beta-2. As to expression, predominantly expressed in monocytes and granulocytes.

The protein localises to the membrane. Its function is as follows. Integrin alpha-X/beta-2 is a receptor for fibrinogen. It recognizes the sequence G-P-R in fibrinogen. It mediates cell-cell interaction during inflammatory responses. It is especially important in monocyte adhesion and chemotaxis. In Homo sapiens (Human), this protein is Integrin alpha-X (ITGAX).